Reading from the N-terminus, the 354-residue chain is Protein RecA (354 aa).

G65 to T72 serves as a coordination point for ATP.

The protein belongs to the RecA family.

It is found in the cytoplasm. In terms of biological role, can catalyze the hydrolysis of ATP in the presence of single-stranded DNA, the ATP-dependent uptake of single-stranded DNA by duplex DNA, and the ATP-dependent hybridization of homologous single-stranded DNAs. It interacts with LexA causing its activation and leading to its autocatalytic cleavage. The chain is Protein RecA from Pseudomonas syringae pv. syringae (strain B728a).